The following is a 480-amino-acid chain: Proline--tRNA ligase (480 aa).

It belongs to the class-II aminoacyl-tRNA synthetase family. ProS type 3 subfamily. In terms of assembly, homodimer.

It is found in the cytoplasm. It catalyses the reaction tRNA(Pro) + L-proline + ATP = L-prolyl-tRNA(Pro) + AMP + diphosphate. Catalyzes the attachment of proline to tRNA(Pro) in a two-step reaction: proline is first activated by ATP to form Pro-AMP and then transferred to the acceptor end of tRNA(Pro). This chain is Proline--tRNA ligase, found in Pyrococcus horikoshii (strain ATCC 700860 / DSM 12428 / JCM 9974 / NBRC 100139 / OT-3).